The sequence spans 89 residues: Large ribosomal subunit protein eL34 (89 aa).

Positions 1–32 (MPAPRFKSGSFKKISKRGPGNKTLTHHRRSKV) are disordered.

The protein belongs to the eukaryotic ribosomal protein eL34 family.

The sequence is that of Large ribosomal subunit protein eL34 from Methanococcus aeolicus (strain ATCC BAA-1280 / DSM 17508 / OCM 812 / Nankai-3).